The following is a 45-amino-acid chain: Ice-structuring protein SS-8 (45 aa).

At Met1 the chain carries Blocked amino end (Met). 3 repeats span residues 9 to 21 (KAARLAAAAALAA), 22 to 33 (KTAADAAAKAAA), and 34 to 45 (KAAAIAAAAASA).

Belongs to the type-I AFP family.

Its function is as follows. Antifreeze proteins lower the blood freezing point. The sequence is that of Ice-structuring protein SS-8 from Myoxocephalus scorpius (Shorthorn sculpin).